Reading from the N-terminus, the 890-residue chain is MINSMPYLHKNLRLLRLLSSKSSPFPLSLRPFSPRSFSLSTLFSSSSSSSSMENNEATNGSKSSSNSFVFNKRRAEGFDITDKKKRNLERKSQKLNPTNTIAYAQILGTGMDTQDTSSSVLLFFDKQRFIFNAGEGLQRFCTEHKIKLSKIDHVFLSRVCSETAGGLPGLLLTLAGIGEEGLSVNVWGPSDLNYLVDAMKSFIPRAAMVHTRSFGPSSTPDPIVLVNDEVVKISAIILKPCHSEEDSGNKSGDLSVVYVCELPEILGKFDLEKAKKVFGVKPGPKYSRLQSGESVKSDERDITVHPSDVMGPSLPGPIVLLVDCPTESHAAELFSLKSLESYYSSPDEQTIGAKFVNCIIHLSPSSVTSSPTYQSWMKKFHLTQHILAGHQRKNMAFPILKASSRIAARLNYLCPQFFPAPGFWPSQLTDNSIIDPTPSNKCSSSNLAESISAENLLKFNLRPVAIRGIDRSCIPAPLTSSEVVDELLSEIPEIKDKSEEIKQFWNKQHNKTIIEKLWLSECNTVLPNCLEKIRRDDMEIVILGTGSSQPSKYRNVSAIFIDLFSRGSLLLDCGEGTLGQLKRRYGLDGADEAVRKLRCIWISHIHADHHTGLARILALRSKLLKGVTHEPVIVVGPRPLKRFLDAYQRLEDLDMEFLDCRSTTATSWASLESGGEAEGSLFTQGSPMQSVFKRSDISMDNSSVLLCLKNLKKVLSEIGLNDLISFPVVHCPQAYGVVIKAAERVNSVGEQILGWKMVYSGDSRPCPETVEASRDATILIHEATFEDALIEEALAKNHSTTKEAIDVGSAANVYRIVLTHFSQRYPKIPVIDESHMHNTCIAFDLMSINMADLHVLPKVLPYFKTLFRDEMVEDEDADDVAMDDLKEEAL.

Residues 1–44 constitute a mitochondrion transit peptide; the sequence is MINSMPYLHKNLRLLRLLSSKSSPFPLSLRPFSPRSFSLSTLFS. The disordered stretch occupies residues 46–67; the sequence is SSSSSSMENNEATNGSKSSSNS.

This sequence belongs to the RNase Z family. As to quaternary structure, homodimer. Zn(2+) serves as cofactor. The cofactor is Ca(2+). Mn(2+) is required as a cofactor. Requires Mg(2+) as cofactor.

It is found in the mitochondrion. The protein resides in the nucleus. The catalysed reaction is Endonucleolytic cleavage of RNA, removing extra 3' nucleotides from tRNA precursor, generating 3' termini of tRNAs. A 3'-hydroxy group is left at the tRNA terminus and a 5'-phosphoryl group is left at the trailer molecule.. In terms of biological role, zinc phosphodiesterase, which displays tRNA 3'-processing endonuclease activity. Involved in tRNA maturation, by removing a 3'-trailer from precursor tRNA. Can process the mitochondrial tRNA-like structures (t-elements). Involved in the processing of small nucleolar RNAs (snoRNAs). The protein is tRNase Z TRZ3, mitochondrial of Arabidopsis thaliana (Mouse-ear cress).